The primary structure comprises 458 residues: NADH-ubiquinone oxidoreductase chain 4 (458 aa).

13 helical membrane-spanning segments follow: residues 23-43, 59-79, 99-119, 148-168, 174-194, 197-217, 227-247, 260-280, 289-311, 315-337, 355-375, 396-416, and 438-458; these read LLWTATTFFSFLIAALSTLTL, IDQFSCPLIMLSCWLLPLTIM, LLILLQVLLCITFGASNLLMF, LYFLFYTLSASLPLLLALIMI, SLSIYIIPLSNLTLLLNTPWS, LWWIACFLAFLIKMPLYIFHL, PIAGSMILAAILLKLGGYGMI, LAVPFMIIAMWGMIVTSSICL, IAYSSVSHMGLVVAGIFTMTPWA, ALAMMIAHGLVSSGLLCLANITY, FPLMSFWWLMMTFANMALPPF, ILLLGLSMTLTALFSLNMLIM, and LMLMHMAPIILLIANPSAIMI.

It belongs to the complex I subunit 4 family.

Its subcellular location is the mitochondrion membrane. The catalysed reaction is a ubiquinone + NADH + 5 H(+)(in) = a ubiquinol + NAD(+) + 4 H(+)(out). Functionally, core subunit of the mitochondrial membrane respiratory chain NADH dehydrogenase (Complex I) that is believed to belong to the minimal assembly required for catalysis. Complex I functions in the transfer of electrons from NADH to the respiratory chain. The immediate electron acceptor for the enzyme is believed to be ubiquinone. In Petromyzon marinus (Sea lamprey), this protein is NADH-ubiquinone oxidoreductase chain 4 (MT-ND4).